The primary structure comprises 128 residues: S-adenosylmethionine decarboxylase proenzyme (128 aa).

Ser61 serves as the catalytic Schiff-base intermediate with substrate; via pyruvic acid. Pyruvic acid (Ser); by autocatalysis is present on Ser61. Residue His66 is the Proton acceptor; for processing activity of the active site. The active-site Proton donor; for catalytic activity is the Cys81.

The protein belongs to the prokaryotic AdoMetDC family. Type 1 subfamily. In terms of assembly, heterotetramer of two alpha and two beta chains arranged as a dimer of alpha/beta heterodimers. The cofactor is pyruvate. Post-translationally, is synthesized initially as an inactive proenzyme. Formation of the active enzyme involves a self-maturation process in which the active site pyruvoyl group is generated from an internal serine residue via an autocatalytic post-translational modification. Two non-identical subunits are generated from the proenzyme in this reaction, and the pyruvate is formed at the N-terminus of the alpha chain, which is derived from the carboxyl end of the proenzyme. The post-translation cleavage follows an unusual pathway, termed non-hydrolytic serinolysis, in which the side chain hydroxyl group of the serine supplies its oxygen atom to form the C-terminus of the beta chain, while the remainder of the serine residue undergoes an oxidative deamination to produce ammonia and the pyruvoyl group blocking the N-terminus of the alpha chain.

It carries out the reaction S-adenosyl-L-methionine + H(+) = S-adenosyl 3-(methylsulfanyl)propylamine + CO2. Its pathway is amine and polyamine biosynthesis; S-adenosylmethioninamine biosynthesis; S-adenosylmethioninamine from S-adenosyl-L-methionine: step 1/1. Functionally, catalyzes the decarboxylation of S-adenosylmethionine to S-adenosylmethioninamine (dcAdoMet), the propylamine donor required for the synthesis of the polyamines spermine and spermidine from the diamine putrescine. In Parasynechococcus marenigrum (strain WH8102), this protein is S-adenosylmethionine decarboxylase proenzyme.